A 468-amino-acid chain; its full sequence is MNLSLSDLHRQVSRLVQQESGDCTGKLRGNVAANKETTFQGLTIASGARESEKVFAQTVLSHVANIVLTQEDTAKLLQSTVKHNLNNYELRSVGNGNSVLVSLRSDQMTLQDAKVLLEAALRQESGARGHVSSHSHSVLHAPGTPVREGLRSHLDPRTPPLPPRERPHTSGHHGAGEARATAPSTVSPYGPEARAELSSRLTTLRNTLAPATNDPRYLQACGGEKLNRFRDIQCCRQTAVRADLNANYIQVGNTRTIACQYPLQSQLESHFRMLAENRTPVLAVLASSSEIANQRFGMPDYFRQSGTYGSITVESKMTQQVGLGDGIMADMYTLTIREAGQKTISVPVVHVGNWPDQTAVSSEVTKALASLVDQTAETKRNMYESKGSSAVADDSKLRPVIHCRAGVGRTAQLIGAMCMNDSRNSQLSVEDMVSQMRVQRNGIMVQKDEQLDVLIKLAEGQGRPLLNS.

Residues 127–194 form a disordered region; it reads ARGHVSSHSH…TVSPYGPEAR (68 aa). A compositionally biased stretch (low complexity) spans 130-140; the sequence is HVSSHSHSVLH. The 310-residue stretch at 152–461 folds into the Tyrosine-protein phosphatase domain; sequence SHLDPRTPPL…DVLIKLAEGQ (310 aa). The active-site Phosphocysteine intermediate is cysteine 403.

This sequence belongs to the protein-tyrosine phosphatase family. Non-receptor class subfamily. As to quaternary structure, monomer.

The protein resides in the secreted. It catalyses the reaction O-phospho-L-tyrosyl-[protein] + H2O = L-tyrosyl-[protein] + phosphate. Essential virulence determinant. This protein is a protein tyrosine phosphatase. The essential function of YopH in Yersinia pathogenesis is host-protein dephosphorylation. It contributes to the ability of the bacteria to resist phagocytosis by peritoneal macrophages. The chain is Tyrosine-protein phosphatase YopH (yopH) from Yersinia enterocolitica.